The primary structure comprises 127 residues: Large ribosomal subunit protein bL12 (127 aa).

This sequence belongs to the bacterial ribosomal protein bL12 family. In terms of assembly, homodimer. Part of the ribosomal stalk of the 50S ribosomal subunit. Forms a multimeric L10(L12)X complex, where L10 forms an elongated spine to which 2 to 4 L12 dimers bind in a sequential fashion. Binds GTP-bound translation factors.

Forms part of the ribosomal stalk which helps the ribosome interact with GTP-bound translation factors. Is thus essential for accurate translation. The sequence is that of Large ribosomal subunit protein bL12 from Nitratiruptor sp. (strain SB155-2).